A 77-amino-acid chain; its full sequence is MKADILQHKLVPEHTILSEEEAQKVLDDLNVRLDQIPKILPTDPVVKAIDAKVGDILKITRKSETAGIFVAYRVVRD.

It belongs to the archaeal Rpo5/eukaryotic RPB5 RNA polymerase subunit family. Part of the RNA polymerase complex.

The protein resides in the cytoplasm. The enzyme catalyses RNA(n) + a ribonucleoside 5'-triphosphate = RNA(n+1) + diphosphate. DNA-dependent RNA polymerase (RNAP) catalyzes the transcription of DNA into RNA using the four ribonucleoside triphosphates as substrates. This is DNA-directed RNA polymerase subunit Rpo5 from Methanosphaera stadtmanae (strain ATCC 43021 / DSM 3091 / JCM 11832 / MCB-3).